We begin with the raw amino-acid sequence, 42 residues long: Delta-hexatoxin-Iw1a (42 aa).

Disulfide bonds link cysteine 1–cysteine 15, cysteine 8–cysteine 20, cysteine 14–cysteine 31, and cysteine 16–cysteine 42.

It belongs to the neurotoxin 06 (delta-actx) family. As to expression, expressed by the venom gland.

Its subcellular location is the secreted. In terms of biological role, inhibits tetrodotoxin-sensitive sodium channels by binding to site 3. It slows the inactivation, causes a prolongation of action potential duration resulting in repetitive firing in autonomic and motor nerve fibers. Does not depolarize the resting potential. Does not affect tetrodotoxin-resistant sodium channels. This lethal neurotoxin is active on both insect and mammalian voltage-gated sodium channels (Nav). This Illawarra wisharti (Illawarra funnel-web spider) protein is Delta-hexatoxin-Iw1a.